A 104-amino-acid chain; its full sequence is Thioredoxin (104 aa).

Residues 2 to 104 (AIVKATDQSF…ALQELVNKHL (103 aa)) form the Thioredoxin domain. C29 and C32 form a disulfide bridge.

Belongs to the thioredoxin family.

Its function is as follows. Participates in various redox reactions through the reversible oxidation of its active center dithiol to a disulfide and catalyzes dithiol-disulfide exchange reactions. This is Thioredoxin (trxA) from Bacillus subtilis (strain 168).